A 299-amino-acid chain; its full sequence is Virginiamycin B lyase (299 aa).

Substrate is bound at residue His229. Glu269 contacts Mg(2+). Residue His271 is the Proton acceptor of the active site. Glu286 serves as a coordination point for Mg(2+).

Belongs to the Vgb family. As to quaternary structure, monomer. Requires Mg(2+) as cofactor.

In terms of biological role, inactivates the type B streptogramin antibiotics by linearizing the lactone ring at the ester linkage, generating a free phenylglycine carboxylate and converting the threonyl moiety into 2-amino-butenoic acid. The protein is Virginiamycin B lyase of Bordetella bronchiseptica (strain ATCC BAA-588 / NCTC 13252 / RB50) (Alcaligenes bronchisepticus).